Reading from the N-terminus, the 303-residue chain is Olfactory receptor 4X2 (303 aa).

Residues M1–R17 lie on the Extracellular side of the membrane. The chain crosses the membrane as a helical span at residues V18–V41. At M42–S49 the chain is on the cytoplasmic side. Residues P50–P71 form a helical membrane-spanning segment. The Extracellular portion of the chain corresponds to K72–Q92. An intrachain disulfide couples C89 to C181. Residues L93–Y112 form a helical membrane-spanning segment. Topologically, residues D113–Q131 are cytoplasmic. The chain crosses the membrane as a helical span at residues V132–A150. Residues Q151–I187 are Extracellular-facing. A helical transmembrane segment spans residues G188–M211. The Cytoplasmic portion of the chain corresponds to V212–K227. A helical transmembrane segment spans residues A228–S250. The Extracellular portion of the chain corresponds to L251–K261. The helical transmembrane segment at M262–L281 threads the bilayer. The Cytoplasmic portion of the chain corresponds to R282–K303.

Belongs to the G-protein coupled receptor 1 family.

It is found in the cell membrane. In terms of biological role, odorant receptor. In Homo sapiens (Human), this protein is Olfactory receptor 4X2 (OR4X2).